A 95-amino-acid chain; its full sequence is Integration host factor subunit beta (95 aa).

Belongs to the bacterial histone-like protein family. In terms of assembly, heterodimer of an alpha and a beta chain.

Functionally, this protein is one of the two subunits of integration host factor, a specific DNA-binding protein that functions in genetic recombination as well as in transcriptional and translational control. The chain is Integration host factor subunit beta from Erwinia tasmaniensis (strain DSM 17950 / CFBP 7177 / CIP 109463 / NCPPB 4357 / Et1/99).